A 304-amino-acid chain; its full sequence is Phosphoribosylaminoimidazole-succinocarboxamide synthase (304 aa).

Belongs to the SAICAR synthetase family.

It carries out the reaction 5-amino-1-(5-phospho-D-ribosyl)imidazole-4-carboxylate + L-aspartate + ATP = (2S)-2-[5-amino-1-(5-phospho-beta-D-ribosyl)imidazole-4-carboxamido]succinate + ADP + phosphate + 2 H(+). The protein operates within purine metabolism; IMP biosynthesis via de novo pathway; 5-amino-1-(5-phospho-D-ribosyl)imidazole-4-carboxamide from 5-amino-1-(5-phospho-D-ribosyl)imidazole-4-carboxylate: step 1/2. The protein is Phosphoribosylaminoimidazole-succinocarboxamide synthase of Streptomyces griseus subsp. griseus (strain JCM 4626 / CBS 651.72 / NBRC 13350 / KCC S-0626 / ISP 5235).